Reading from the N-terminus, the 291-residue chain is 4-hydroxy-tetrahydrodipicolinate synthase (291 aa).

Position 45 (T45) interacts with pyruvate. Y131 acts as the Proton donor/acceptor in catalysis. K159 (schiff-base intermediate with substrate) is an active-site residue. Residue I202 participates in pyruvate binding.

It belongs to the DapA family. In terms of assembly, homotetramer; dimer of dimers.

It is found in the cytoplasm. The enzyme catalyses L-aspartate 4-semialdehyde + pyruvate = (2S,4S)-4-hydroxy-2,3,4,5-tetrahydrodipicolinate + H2O + H(+). The protein operates within amino-acid biosynthesis; L-lysine biosynthesis via DAP pathway; (S)-tetrahydrodipicolinate from L-aspartate: step 3/4. Catalyzes the condensation of (S)-aspartate-beta-semialdehyde [(S)-ASA] and pyruvate to 4-hydroxy-tetrahydrodipicolinate (HTPA). This chain is 4-hydroxy-tetrahydrodipicolinate synthase, found in Methanosarcina barkeri (strain Fusaro / DSM 804).